Consider the following 300-residue polypeptide: Protoheme IX farnesyltransferase (300 aa).

The next 9 helical transmembrane spans lie at 20-40 (ITKM…YFLG), 43-63 (TIDF…VGAS), 94-114 (PVAF…LYVI), 116-136 (PKTA…YTPL), 142-162 (LSVF…WVAA), 173-193 (LFMI…WWLF), 215-235 (IQII…VFGV), 241-261 (LTPV…YYAI), and 276-296 (MFAS…DKFI).

It belongs to the UbiA prenyltransferase family. Protoheme IX farnesyltransferase subfamily.

It is found in the cell membrane. The enzyme catalyses heme b + (2E,6E)-farnesyl diphosphate + H2O = Fe(II)-heme o + diphosphate. It functions in the pathway porphyrin-containing compound metabolism; heme O biosynthesis; heme O from protoheme: step 1/1. Converts heme B (protoheme IX) to heme O by substitution of the vinyl group on carbon 2 of heme B porphyrin ring with a hydroxyethyl farnesyl side group. This is Protoheme IX farnesyltransferase from Christiangramia forsetii (strain DSM 17595 / CGMCC 1.15422 / KT0803) (Gramella forsetii).